Reading from the N-terminus, the 361-residue chain is Mannose-1-phosphate guanyltransferase (361 aa).

T153 is subject to Phosphothreonine. A Glycyl lysine isopeptide (Lys-Gly) (interchain with G-Cter in ubiquitin) cross-link involves residue K244.

This sequence belongs to the transferase hexapeptide repeat family.

It is found in the cytoplasm. It catalyses the reaction alpha-D-mannose 1-phosphate + GTP + H(+) = GDP-alpha-D-mannose + diphosphate. It functions in the pathway nucleotide-sugar biosynthesis; GDP-alpha-D-mannose biosynthesis; GDP-alpha-D-mannose from alpha-D-mannose 1-phosphate (GTP route): step 1/1. Its function is as follows. Involved in cell wall synthesis where it is required for glycosylation. Involved in cell cycle progression through cell-size checkpoint. This Saccharomyces cerevisiae (strain ATCC 204508 / S288c) (Baker's yeast) protein is Mannose-1-phosphate guanyltransferase (PSA1).